Here is a 366-residue protein sequence, read N- to C-terminus: Ribosomal RNA large subunit methyltransferase M (366 aa).

S-adenosyl-L-methionine is bound by residues Ser188, 221-224, Asp240, Asp260, and Asp277; that span reads CPGG. The active-site Proton acceptor is the Lys306.

The protein belongs to the class I-like SAM-binding methyltransferase superfamily. RNA methyltransferase RlmE family. RlmM subfamily. In terms of assembly, monomer.

The protein localises to the cytoplasm. The catalysed reaction is cytidine(2498) in 23S rRNA + S-adenosyl-L-methionine = 2'-O-methylcytidine(2498) in 23S rRNA + S-adenosyl-L-homocysteine + H(+). In terms of biological role, catalyzes the 2'-O-methylation at nucleotide C2498 in 23S rRNA. The chain is Ribosomal RNA large subunit methyltransferase M from Shigella dysenteriae serotype 1 (strain Sd197).